The chain runs to 727 residues: Protein edg-1 (727 aa).

The interval 703–727 (FAESSVKPTTSSAYGNSSNFSRYAD) is disordered.

As to quaternary structure, may interact with deps-1 and prg-1.

The protein localises to the cytoplasmic granule. Plays a role in regulating deps-1 cluster formation in the germline. The protein is Protein edg-1 of Caenorhabditis elegans.